Consider the following 111-residue polypeptide: Large ribosomal subunit protein uL22 (111 aa).

It belongs to the universal ribosomal protein uL22 family. As to quaternary structure, part of the 50S ribosomal subunit.

Functionally, this protein binds specifically to 23S rRNA; its binding is stimulated by other ribosomal proteins, e.g. L4, L17, and L20. It is important during the early stages of 50S assembly. It makes multiple contacts with different domains of the 23S rRNA in the assembled 50S subunit and ribosome. In terms of biological role, the globular domain of the protein is located near the polypeptide exit tunnel on the outside of the subunit, while an extended beta-hairpin is found that lines the wall of the exit tunnel in the center of the 70S ribosome. This chain is Large ribosomal subunit protein uL22, found in Clostridium kluyveri (strain NBRC 12016).